We begin with the raw amino-acid sequence, 495 residues long: Phosphomethylpyrimidine synthase (495 aa).

Residues Asn125, Met154, Tyr183, His219, 239–241 (SRG), 280–283 (DGLR), and Glu319 each bind substrate. A Zn(2+)-binding site is contributed by His323. Tyr346 is a substrate binding site. Residue His387 participates in Zn(2+) binding. 3 residues coordinate [4Fe-4S] cluster: Cys467, Cys470, and Cys475.

The protein belongs to the ThiC family. Requires [4Fe-4S] cluster as cofactor.

It catalyses the reaction 5-amino-1-(5-phospho-beta-D-ribosyl)imidazole + S-adenosyl-L-methionine = 4-amino-2-methyl-5-(phosphooxymethyl)pyrimidine + CO + 5'-deoxyadenosine + formate + L-methionine + 3 H(+). It functions in the pathway cofactor biosynthesis; thiamine diphosphate biosynthesis. Catalyzes the synthesis of the hydroxymethylpyrimidine phosphate (HMP-P) moiety of thiamine from aminoimidazole ribotide (AIR) in a radical S-adenosyl-L-methionine (SAM)-dependent reaction. This Leptospira interrogans serogroup Icterohaemorrhagiae serovar Lai (strain 56601) protein is Phosphomethylpyrimidine synthase.